A 293-amino-acid chain; its full sequence is ATP synthase gamma chain (293 aa).

The protein belongs to the ATPase gamma chain family. As to quaternary structure, F-type ATPases have 2 components, CF(1) - the catalytic core - and CF(0) - the membrane proton channel. CF(1) has five subunits: alpha(3), beta(3), gamma(1), delta(1), epsilon(1). CF(0) has three main subunits: a, b and c.

The protein resides in the cell inner membrane. In terms of biological role, produces ATP from ADP in the presence of a proton gradient across the membrane. The gamma chain is believed to be important in regulating ATPase activity and the flow of protons through the CF(0) complex. The chain is ATP synthase gamma chain from Beijerinckia indica subsp. indica (strain ATCC 9039 / DSM 1715 / NCIMB 8712).